Reading from the N-terminus, the 129-residue chain is MIVRDLQEILGTDREVTGEGWTSRRLLLKKDGMGFSFHETIIAAGTEHLFWYKNHLEAVYCVAGNGTIEDLATGQVHRIKNGVLYALNNHDRHVLRGGTEDMRLICAFNPPVTGRETHDSDGSYELVEE.

It belongs to the ectoine synthase family.

It carries out the reaction (2S)-4-acetamido-2-aminobutanoate = L-ectoine + H2O. The protein operates within amine and polyamine biosynthesis; ectoine biosynthesis; L-ectoine from L-aspartate 4-semialdehyde: step 3/3. Functionally, catalyzes the circularization of gamma-N-acetyl-alpha,gamma-diaminobutyric acid (ADABA) to ectoine (1,4,5,6-tetrahydro-2-methyl-4-pyrimidine carboxylic acid), which is an excellent osmoprotectant. The protein is L-ectoine synthase of Desulfosudis oleivorans (strain DSM 6200 / JCM 39069 / Hxd3) (Desulfococcus oleovorans).